We begin with the raw amino-acid sequence, 216 residues long: NKG2-D type II integral membrane protein (216 aa).

The Cytoplasmic segment spans residues 1 to 51; sequence MGWIRGRRSRHSWEMSEFHNYNLDLKKSDFSTRWQKQRCPVVKSKCRENAS. Residues 52-72 form a helical; Signal-anchor for type II membrane protein membrane-spanning segment; it reads PFFFCCFIAVAMGIRFIIMVT. Residues 73–216 lie on the Extracellular side of the membrane; sequence IWSAVFLNSL…NTYICMQRTV (144 aa). 4 cysteine pairs are disulfide-bonded: cysteine 96–cysteine 105, cysteine 99–cysteine 110, cysteine 127–cysteine 211, and cysteine 189–cysteine 203. The C-type lectin domain occupies 98–213; it reads PCPKNWICYK…STPNTYICMQ (116 aa). N-linked (GlcNAc...) asparagine glycosylation is found at asparagine 131, asparagine 163, and asparagine 202.

As to quaternary structure, homodimer; disulfide-linked. Heterohexamer composed of two subunits of KLRK1 and four subunits of HCST/DAP10. Interacts (via transmembrane domain) with HCST/DAP10 (via transmembrane domain); the interaction is required for KLRK1 NK cell surface and induces NK cell-mediated cytotoxicity. Does not interact with TYROBP. Interacts with CEACAM1; recruits PTPN6 that dephosphorylates VAV1. In terms of tissue distribution, expressed in natural killer (NK) cells, CD8(+) alpha-beta and gamma-delta T-cells. Expressed on essentially all CD56+CD3- NK cells from freshly isolated PBMC. Expressed in interferon-producing killer dendritic cells (IKDCs).

It localises to the cell membrane. Functionally, functions as an activating and costimulatory receptor involved in immunosurveillance upon binding to various cellular stress-inducible ligands displayed at the surface of autologous tumor cells and virus-infected cells. Provides both stimulatory and costimulatory innate immune responses on activated killer (NK) cells, leading to cytotoxic activity. Acts as a costimulatory receptor for T-cell receptor (TCR) in CD8(+) T-cell-mediated adaptive immune responses by amplifying T-cell activation. Stimulates perforin-mediated elimination of ligand-expressing tumor cells. Signaling involves calcium influx, culminating in the expression of TNF-alpha. Participates in NK cell-mediated bone marrow graft rejection. May play a regulatory role in differentiation and survival of NK cells. Binds to ligands belonging to various subfamilies of MHC class I-related glycoproteins including MICA, MICB, RAET1E, RAET1G, RAET1L/ULBP6, ULBP1, ULBP2, ULBP3 (ULBP2&gt;ULBP1&gt;ULBP3) and ULBP4. The protein is NKG2-D type II integral membrane protein (KLRK1) of Homo sapiens (Human).